The primary structure comprises 223 residues: Proteasome subunit beta type-1 (223 aa).

It belongs to the peptidase T1B family. As to quaternary structure, component of the 20S core complex of the 26S proteasome. The 26S proteasome is composed of a core protease (CP), known as the 20S proteasome, capped at one or both ends by the 19S regulatory particle (RP/PA700). The 20S proteasome core is composed of 28 subunits that are arranged in four stacked rings, resulting in a barrel-shaped structure. The two end rings are each formed by seven alpha subunits, and the two central rings are each formed by seven beta subunits. The catalytic chamber with the active sites is on the inside of the barrel. In terms of tissue distribution, present in all tissues examined. Slightly lower levels in roots.

Its subcellular location is the cytoplasm. It is found in the nucleus. Functionally, non-catalytic component of the proteasome, a multicatalytic proteinase complex which is characterized by its ability to cleave peptides with Arg, Phe, Tyr, Leu, and Glu adjacent to the leaving group at neutral or slightly basic pH. The proteasome has an ATP-dependent proteolytic activity. This chain is Proteasome subunit beta type-1 (PBF1), found in Arabidopsis thaliana (Mouse-ear cress).